Consider the following 64-residue polypeptide: Lantibiotic actagardine (64 aa).

A propeptide spanning residues 1–45 (MSALAIEKSWKDVDLRDGATSHPAGLGFGELTFEDLREDRTIYAA) is cleaved from the precursor. The lanthionine (Ser-Cys) cross-link spans 46-51 (SSGWVC). Cross-links (beta-methyllanthionine (Thr-Cys)) lie at residues 52 to 57 (TLTIEC) and 54 to 62 (TIECGTVIC). Positions 59–64 (TVICAC) form a cross-link, beta-methyllanthionine sulfoxide (Thr-Cys).

This sequence belongs to the type B lantibiotic family. Maturation of lantibiotics involves the enzymatic conversion of Thr, and Ser into dehydrated AA by the enzyme garM and the formation of thioether bonds with cysteine. The 59-64 beta-methyllanthionine thioether bond is oxidized to a sulfoxide by the monooxygenase GarO. This is followed by membrane translocation and cleavage of the modified precursor. Post-translationally, the sulfoxide group of the 59-64 beta-methyllanthionine thioether bond is mildly important for activity, since the antibacterial activity of deoxyactagardine is marginally lower compared with oxidized actagardine.

Its function is as follows. Has potent antibacterial activity against some Gram-positive bacteria. Has good antistreptococcal activity. Inhibits cell wall biosynthesis by binding to lipid II and blocking transglycosylation. The sequence is that of Lantibiotic actagardine from Actinoplanes garbadinensis.